A 340-amino-acid polypeptide reads, in one-letter code: L-threonine 3-dehydrogenase (340 aa).

A Zn(2+)-binding site is contributed by Cys-38. Residues Thr-40 and His-43 each act as charge relay system in the active site. 6 residues coordinate Zn(2+): His-63, Glu-64, Cys-93, Cys-96, Cys-99, and Cys-107. Residues Ile-175, Asp-195, Arg-200, 262–264 (LGI), and 286–287 (IY) each bind NAD(+).

This sequence belongs to the zinc-containing alcohol dehydrogenase family. Homotetramer. Requires Zn(2+) as cofactor.

The protein localises to the cytoplasm. It carries out the reaction L-threonine + NAD(+) = (2S)-2-amino-3-oxobutanoate + NADH + H(+). It participates in amino-acid degradation; L-threonine degradation via oxydo-reductase pathway; glycine from L-threonine: step 1/2. Its function is as follows. Catalyzes the NAD(+)-dependent oxidation of L-threonine to 2-amino-3-ketobutyrate. This Legionella pneumophila subsp. pneumophila (strain Philadelphia 1 / ATCC 33152 / DSM 7513) protein is L-threonine 3-dehydrogenase.